Reading from the N-terminus, the 343-residue chain is Zinc finger CCCH domain-containing protein 1 (343 aa).

A disordered region spans residues 1–102; it reads MSDSGEPKPS…PERSVFHYDS (102 aa). The span at 7 to 25 shows a compositional bias: low complexity; it reads PKPSQQEEPLPQPAAQETQ. Residues 35–44 are compositionally biased toward basic residues; sequence KPTKSKNIRK. Over residues 79–91 the composition is skewed to low complexity; it reads SSGPSKSSTTTSG. The C3H1-type zinc finger occupies 200–228; that stretch reads DYQPDICKDYKETGYCGYGDSCKFLHDRG. Positions 249–268 are disordered; the sequence is RNKAMGVEDEDDEADKDSDE. A compositionally biased stretch (acidic residues) spans 255–268; that stretch reads VEDEDDEADKDSDE. The RING-type zinc-finger motif lies at 277-315; sequence CFICREPFVDPVVTKCKHYFCEHCALKHHTKNKKCFVCN.

This chain is Zinc finger CCCH domain-containing protein 1, found in Arabidopsis thaliana (Mouse-ear cress).